A 792-amino-acid chain; its full sequence is Probable CoA-transferase Rv1866 (792 aa).

Catalysis depends on Asp558, which acts as the Nucleophile.

This sequence belongs to the CoA-transferase III family.

Its function is as follows. Probable CoA-transferase. The sequence is that of Probable CoA-transferase Rv1866 from Mycobacterium tuberculosis (strain ATCC 25618 / H37Rv).